Reading from the N-terminus, the 342-residue chain is Probable dual-specificity RNA methyltransferase RlmN (342 aa).

Glu-91 functions as the Proton acceptor in the catalytic mechanism. The region spanning 97–327 (YKHGNSICVS…TTIRREMGAD (231 aa)) is the Radical SAM core domain. The cysteines at positions 104 and 332 are disulfide-linked. Cys-111, Cys-115, and Cys-118 together coordinate [4Fe-4S] cluster. S-adenosyl-L-methionine contacts are provided by residues 158-159 (GE), Ser-190, 213-215 (SLH), and Asn-289. Catalysis depends on Cys-332, which acts as the S-methylcysteine intermediate.

It belongs to the radical SAM superfamily. RlmN family. [4Fe-4S] cluster serves as cofactor.

The protein resides in the cytoplasm. It catalyses the reaction adenosine(2503) in 23S rRNA + 2 reduced [2Fe-2S]-[ferredoxin] + 2 S-adenosyl-L-methionine = 2-methyladenosine(2503) in 23S rRNA + 5'-deoxyadenosine + L-methionine + 2 oxidized [2Fe-2S]-[ferredoxin] + S-adenosyl-L-homocysteine. It carries out the reaction adenosine(37) in tRNA + 2 reduced [2Fe-2S]-[ferredoxin] + 2 S-adenosyl-L-methionine = 2-methyladenosine(37) in tRNA + 5'-deoxyadenosine + L-methionine + 2 oxidized [2Fe-2S]-[ferredoxin] + S-adenosyl-L-homocysteine. In terms of biological role, specifically methylates position 2 of adenine 2503 in 23S rRNA and position 2 of adenine 37 in tRNAs. The chain is Probable dual-specificity RNA methyltransferase RlmN from Clostridium botulinum (strain ATCC 19397 / Type A).